The sequence spans 116 residues: Protein TCL1B1 (116 aa).

This sequence belongs to the TCL1 family.

The chain is Protein TCL1B1 (Tcl1b1) from Mus musculus (Mouse).